A 388-amino-acid chain; its full sequence is Succinate--CoA ligase [ADP-forming] subunit beta (388 aa).

In terms of domain architecture, ATP-grasp spans 9-245 (KALLKEYGMP…KSQENERELK (237 aa)). Residues Lys-46, 53 to 55 (GRG), Glu-100, Tyr-103, and Glu-108 each bind ATP. 2 residues coordinate Mg(2+): Asn-200 and Asp-214. Substrate-binding positions include Asn-265 and 322-324 (GIV).

The protein belongs to the succinate/malate CoA ligase beta subunit family. Heterotetramer of two alpha and two beta subunits. Mg(2+) serves as cofactor.

It catalyses the reaction succinate + ATP + CoA = succinyl-CoA + ADP + phosphate. The catalysed reaction is GTP + succinate + CoA = succinyl-CoA + GDP + phosphate. It functions in the pathway carbohydrate metabolism; tricarboxylic acid cycle; succinate from succinyl-CoA (ligase route): step 1/1. In terms of biological role, succinyl-CoA synthetase functions in the citric acid cycle (TCA), coupling the hydrolysis of succinyl-CoA to the synthesis of either ATP or GTP and thus represents the only step of substrate-level phosphorylation in the TCA. The beta subunit provides nucleotide specificity of the enzyme and binds the substrate succinate, while the binding sites for coenzyme A and phosphate are found in the alpha subunit. The sequence is that of Succinate--CoA ligase [ADP-forming] subunit beta from Acinetobacter baumannii (strain SDF).